Reading from the N-terminus, the 154-residue chain is MNVIEGNLVGTGLKIGIVVSRFNEFITSKLLSGAIDGLTRHGVSDNDITVTWVPGAFEIPLVAKKMAESKQFDAIITLGAVIRGATSHFDYVCSEAAKGVSHAALTSGVPVIFGVLTTDTIEQAIERAGTKAGNKGWEAAVSAIEMANVLRGLA.

Residues Phe22, 56–58 (AFE), and 80–82 (AVI) each bind 5-amino-6-(D-ribitylamino)uracil. (2S)-2-hydroxy-3-oxobutyl phosphate is bound at residue 85–86 (AT). Residue His88 is the Proton donor of the active site. Phe113 provides a ligand contact to 5-amino-6-(D-ribitylamino)uracil. Arg127 contacts (2S)-2-hydroxy-3-oxobutyl phosphate.

The protein belongs to the DMRL synthase family. In terms of assembly, forms an icosahedral capsid composed of 60 subunits, arranged as a dodecamer of pentamers.

The enzyme catalyses (2S)-2-hydroxy-3-oxobutyl phosphate + 5-amino-6-(D-ribitylamino)uracil = 6,7-dimethyl-8-(1-D-ribityl)lumazine + phosphate + 2 H2O + H(+). The protein operates within cofactor biosynthesis; riboflavin biosynthesis; riboflavin from 2-hydroxy-3-oxobutyl phosphate and 5-amino-6-(D-ribitylamino)uracil: step 1/2. Its function is as follows. Catalyzes the formation of 6,7-dimethyl-8-ribityllumazine by condensation of 5-amino-6-(D-ribitylamino)uracil with 3,4-dihydroxy-2-butanone 4-phosphate. This is the penultimate step in the biosynthesis of riboflavin. This Geobacillus thermodenitrificans (strain NG80-2) protein is 6,7-dimethyl-8-ribityllumazine synthase.